Here is a 206-residue protein sequence, read N- to C-terminus: N-(5'-phosphoribosyl)anthranilate isomerase (206 aa).

Belongs to the TrpF family.

The enzyme catalyses N-(5-phospho-beta-D-ribosyl)anthranilate = 1-(2-carboxyphenylamino)-1-deoxy-D-ribulose 5-phosphate. The protein operates within amino-acid biosynthesis; L-tryptophan biosynthesis; L-tryptophan from chorismate: step 3/5. This chain is N-(5'-phosphoribosyl)anthranilate isomerase, found in Pseudomonas putida (strain ATCC 700007 / DSM 6899 / JCM 31910 / BCRC 17059 / LMG 24140 / F1).